The sequence spans 339 residues: Heat-inducible transcription repressor HrcA (339 aa).

The protein belongs to the HrcA family.

Negative regulator of class I heat shock genes (grpE-dnaK-dnaJ and groELS operons). Prevents heat-shock induction of these operons. In Paraburkholderia phymatum (strain DSM 17167 / CIP 108236 / LMG 21445 / STM815) (Burkholderia phymatum), this protein is Heat-inducible transcription repressor HrcA.